Here is a 522-residue protein sequence, read N- to C-terminus: Chromosomal replication initiator protein DnaA (522 aa).

Residues 1–71 (MQDFWHAASA…QSLACDYWEM (71 aa)) are domain I, interacts with DnaA modulators. The domain II stretch occupies residues 71 to 185 (MQVDVQFVLD…PVDDTVHERS (115 aa)). A domain III, AAA+ region region spans residues 186–402 (RLNPILTFDN…GALRKILAYS (217 aa)). ATP-binding residues include G230, G232, K233, and T234. Positions 403-522 (NFHGKEITIE…LHVLEQTLKG (120 aa)) are domain IV, binds dsDNA.

This sequence belongs to the DnaA family. In terms of assembly, oligomerizes as a right-handed, spiral filament on DNA at oriC.

The protein localises to the cytoplasm. Functionally, plays an essential role in the initiation and regulation of chromosomal replication. ATP-DnaA binds to the origin of replication (oriC) to initiate formation of the DNA replication initiation complex once per cell cycle. Binds the DnaA box (a 9 base pair repeat at the origin) and separates the double-stranded (ds)DNA. Forms a right-handed helical filament on oriC DNA; dsDNA binds to the exterior of the filament while single-stranded (ss)DNA is stabiized in the filament's interior. The ATP-DnaA-oriC complex binds and stabilizes one strand of the AT-rich DNA unwinding element (DUE), permitting loading of DNA polymerase. After initiation quickly degrades to an ADP-DnaA complex that is not apt for DNA replication. Binds acidic phospholipids. This is Chromosomal replication initiator protein DnaA from Ralstonia nicotianae (strain ATCC BAA-1114 / GMI1000) (Ralstonia solanacearum).